The chain runs to 76 residues: Sec-independent protein translocase protein TatA (76 aa).

A helical membrane pass occupies residues 1–21 (MGGISIWQLLIIVAIIVLLFG). The tract at residues 43–76 (MADDKSQPQDASFEKVEAKEAASTEQKAKEKEQA) is disordered.

The protein belongs to the TatA/E family. The Tat system comprises two distinct complexes: a TatABC complex, containing multiple copies of TatA, TatB and TatC subunits, and a separate TatA complex, containing only TatA subunits. Substrates initially bind to the TatABC complex, which probably triggers association of the separate TatA complex to form the active translocon.

It is found in the cell inner membrane. Its function is as follows. Part of the twin-arginine translocation (Tat) system that transports large folded proteins containing a characteristic twin-arginine motif in their signal peptide across membranes. TatA could form the protein-conducting channel of the Tat system. This Actinobacillus pleuropneumoniae serotype 5b (strain L20) protein is Sec-independent protein translocase protein TatA.